Reading from the N-terminus, the 71-residue chain is Large ribosomal subunit protein uL30 (71 aa).

This sequence belongs to the universal ribosomal protein uL30 family. As to quaternary structure, part of the 50S ribosomal subunit.

The polypeptide is Large ribosomal subunit protein uL30 (Borreliella burgdorferi (strain ATCC 35210 / DSM 4680 / CIP 102532 / B31) (Borrelia burgdorferi)).